The chain runs to 199 residues: Nuclear protein UL4 (199 aa).

It belongs to the alphaherpesvirinae HHV-1 UL4 family.

The protein resides in the host nucleus. This Homo sapiens (Human) protein is Nuclear protein UL4.